We begin with the raw amino-acid sequence, 51 residues long: SPbeta prophage-derived uncharacterized protein YorQ (51 aa).

The sequence is that of SPbeta prophage-derived uncharacterized protein YorQ (yorQ) from Bacillus subtilis (strain 168).